A 715-amino-acid chain; its full sequence is Fatty acid oxidation complex subunit alpha (715 aa).

The tract at residues 1-190 (MDMTSAFTLN…RVGLVDEVVP (190 aa)) is enoyl-CoA hydratase. Residues 306 to 715 (GPLASVGVLG…WNSGETDLKE (410 aa)) form a 3-hydroxyacyl-CoA dehydrogenase region.

This sequence in the N-terminal section; belongs to the enoyl-CoA hydratase/isomerase family. It in the central section; belongs to the 3-hydroxyacyl-CoA dehydrogenase family. As to quaternary structure, heterotetramer of two alpha chains (FadJ) and two beta chains (FadI).

The protein resides in the cytoplasm. It catalyses the reaction a (3S)-3-hydroxyacyl-CoA = a (2E)-enoyl-CoA + H2O. The catalysed reaction is a 4-saturated-(3S)-3-hydroxyacyl-CoA = a (3E)-enoyl-CoA + H2O. The enzyme catalyses a (3S)-3-hydroxyacyl-CoA + NAD(+) = a 3-oxoacyl-CoA + NADH + H(+). It carries out the reaction (3S)-3-hydroxybutanoyl-CoA = (3R)-3-hydroxybutanoyl-CoA. It functions in the pathway lipid metabolism; fatty acid beta-oxidation. Catalyzes the formation of a hydroxyacyl-CoA by addition of water on enoyl-CoA. Also exhibits 3-hydroxyacyl-CoA epimerase and 3-hydroxyacyl-CoA dehydrogenase activities. In Citrobacter koseri (strain ATCC BAA-895 / CDC 4225-83 / SGSC4696), this protein is Fatty acid oxidation complex subunit alpha.